The chain runs to 93 residues: MPKSKVRKKNDFTITSVSRTPVKVKVGPSSVWFVTLFVGLMLIGLVWLMVFQLAALGTQAPTALHWMAQLGPWNYAIAFAFMITGLLLTMRWH.

2 helical membrane-spanning segments follow: residues 31–51 (VWFVTLFVGLMLIGLVWLMVF) and 70–90 (LGPWNYAIAFAFMITGLLLTM).

This sequence belongs to the CrgA family.

The protein localises to the cell membrane. In terms of biological role, involved in cell division. The chain is Cell division protein CrgA from Mycobacterium leprae (strain Br4923).